Consider the following 423-residue polypeptide: UDP-N-acetylglucosamine 1-carboxyvinyltransferase 1 (423 aa).

23–24 lines the phosphoenolpyruvate pocket; the sequence is KN. Residue Arg-96 participates in UDP-N-acetyl-alpha-D-glucosamine binding. Residue Cys-120 is the Proton donor of the active site. Cys-120 carries the post-translational modification 2-(S-cysteinyl)pyruvic acid O-phosphothioketal. UDP-N-acetyl-alpha-D-glucosamine-binding residues include Asp-309 and Val-331.

The protein belongs to the EPSP synthase family. MurA subfamily.

It localises to the cytoplasm. It catalyses the reaction phosphoenolpyruvate + UDP-N-acetyl-alpha-D-glucosamine = UDP-N-acetyl-3-O-(1-carboxyvinyl)-alpha-D-glucosamine + phosphate. The protein operates within cell wall biogenesis; peptidoglycan biosynthesis. Cell wall formation. Adds enolpyruvyl to UDP-N-acetylglucosamine. The polypeptide is UDP-N-acetylglucosamine 1-carboxyvinyltransferase 1 (Streptococcus pyogenes serotype M3 (strain ATCC BAA-595 / MGAS315)).